Here is a 309-residue protein sequence, read N- to C-terminus: 2-phospho-L-lactate transferase (309 aa).

7,8-didemethyl-8-hydroxy-5-deazariboflavin contacts are provided by D50 and R89.

The protein belongs to the CofD family. In terms of assembly, homodimer. It depends on Mg(2+) as a cofactor.

It catalyses the reaction (2S)-lactyl-2-diphospho-5'-guanosine + 7,8-didemethyl-8-hydroxy-5-deazariboflavin = oxidized coenzyme F420-0 + GMP + H(+). It participates in cofactor biosynthesis; coenzyme F420 biosynthesis. Catalyzes the transfer of the 2-phospholactate moiety from (2S)-lactyl-2-diphospho-5'-guanosine to 7,8-didemethyl-8-hydroxy-5-deazariboflavin (FO) with the formation of oxidized coenzyme F420-0 and GMP. The sequence is that of 2-phospho-L-lactate transferase from Methanococcus maripaludis (strain DSM 14266 / JCM 13030 / NBRC 101832 / S2 / LL).